A 309-amino-acid chain; its full sequence is tRNA dimethylallyltransferase (309 aa).

Residue 14-21 coordinates ATP; sequence GPTASGKS. 16-21 contacts substrate; it reads TASGKS. The interval 39 to 42 is interaction with substrate tRNA; it reads DSMQ.

Belongs to the IPP transferase family. In terms of assembly, monomer. It depends on Mg(2+) as a cofactor.

The catalysed reaction is adenosine(37) in tRNA + dimethylallyl diphosphate = N(6)-dimethylallyladenosine(37) in tRNA + diphosphate. In terms of biological role, catalyzes the transfer of a dimethylallyl group onto the adenine at position 37 in tRNAs that read codons beginning with uridine, leading to the formation of N6-(dimethylallyl)adenosine (i(6)A). In Geobacter metallireducens (strain ATCC 53774 / DSM 7210 / GS-15), this protein is tRNA dimethylallyltransferase.